The chain runs to 64 residues: Large ribosomal subunit protein bL35 (64 aa).

Basic residues predominate over residues 1–26 (MPKMKSHRGASKRFKRTASGKLKRSH). Residues 1–42 (MPKMKSHRGASKRFKRTASGKLKRSHAYTSHLFANKSTKAKR) form a disordered region.

The protein belongs to the bacterial ribosomal protein bL35 family.

The sequence is that of Large ribosomal subunit protein bL35 from Exiguobacterium sp. (strain ATCC BAA-1283 / AT1b).